We begin with the raw amino-acid sequence, 361 residues long: MSKQQQTQFINPETPGYVGFANLPNQVHRKSVKKGFEFTLMVVGESGLGKSTLINSLFLTDLYPERVIPGAAEKIERTVQIEASTVEIEERGVKLRLTVVDTPGYGDAINCRDCFKTIICYIDEQFERYLHDESGLNRRHIIDNRVHCCFYFISPFGHGLKPLDVAFMKAIHNKVNIVPVIAKADTLTLKERERLKKRILDEIEEHNIKIYHLPDAESDEDEDFKEQTRLLKASIPFSVVGSNQLIEAKGKKVRGRLYPWGVVEVENPEHNDFLKLRTMLITHMQDLQEVTQDLHYENFRSERLKRGGRKVENEDMNKDQILLEKEAELRRMQEMIARMQAQMQLQLQGGDGDSGVHGQHV.

Position 17 is a phosphotyrosine (Tyr17). The Septin-type G domain maps to 34-306; that stretch reads KGFEFTLMVV…ENFRSERLKR (273 aa). Positions 44-51 are G1 motif; that stretch reads GESGLGKS. GTP is bound by residues 44–51, Thr78, Gly104, and 183–191; these read GESGLGKS and KADTLTLKE. The interval 101–104 is G3 motif; the sequence is DTPG. The interval 182 to 185 is G4 motif; sequence AKAD. An N6-acetyllysine modification is found at Lys190. Tyr211 carries the post-translational modification Phosphotyrosine. Ser218 carries the post-translational modification Phosphoserine. GTP-binding residues include Gly241 and Arg256. The important for dimerization stretch occupies residues 260-270; the sequence is WGVVEVENPEH.

The protein belongs to the TRAFAC class TrmE-Era-EngA-EngB-Septin-like GTPase superfamily. Septin GTPase family. Septins polymerize into heterooligomeric protein complexes that form filaments, and associate with cellular membranes, actin filaments and microtubules. GTPase activity is required for filament formation. Filaments are assembled from asymmetrical heterotrimers, composed of SEPTIN2, SEPTIN6 and SEPTIN7 that associate head-to-head to form a hexameric unit. Interaction between SEPTIN2 and SEPTIN7 seems indirect. Interacts with SEPTIN5. Interaction with SEPTIN4 not detected. Interacts with SEPTIN9. Component of a septin core octameric complex consisting of SEPTIN12, SEPTIN7, SEPTIN6 and SEPTIN2 or SEPTIN4 in the order 12-7-6-2-2-6-7-12 or 12-7-6-4-4-6-7-12 and located in the sperm annulus. Interacts with MAP4. Interacts with DZIP1L.

It localises to the cytoplasm. It is found in the cytoskeleton. Its subcellular location is the spindle. The protein localises to the chromosome. The protein resides in the centromere. It localises to the kinetochore. It is found in the cleavage furrow. Its subcellular location is the midbody. The protein localises to the cell cortex. The protein resides in the cell projection. It localises to the cilium membrane. It is found in the cilium. Its subcellular location is the flagellum. In terms of biological role, filament-forming cytoskeletal GTPase. Forms a filamentous structure with SEPTIN12, SEPTIN6, SEPTIN2 and probably SEPTIN4 at the sperm annulus which is required for the structural integrity and motility of the sperm tail during postmeiotic differentiation. Required for normal organization of the actin cytoskeleton. Plays a role in the biogenesis of polarized columnar-shaped epithelium by maintaining polyglutamylated microtubules, thus facilitating efficient vesicle transport, and by impeding MAP4 binding to tubulin. Required for the progression through mitosis. Forms a scaffold at the midplane of the mitotic splindle required to maintain CENPE localization at kinetochores and consequently chromosome congression. During anaphase, may be required for chromosome segregation and spindle elongation. Plays a role in ciliogenesis and collective cell movements. In cilia, required for the integrity of the diffusion barrier at the base of the primary cilium that prevents diffusion of transmembrane proteins between the cilia and plasma membranes: probably acts by regulating the assembly of the tectonic-like complex (also named B9 complex) by localizing TMEM231 protein. The polypeptide is Septin-2 (Bos taurus (Bovine)).